A 513-amino-acid polypeptide reads, in one-letter code: Maturase K (513 aa).

Belongs to the intron maturase 2 family. MatK subfamily.

The protein localises to the plastid. It localises to the chloroplast. Its function is as follows. Usually encoded in the trnK tRNA gene intron. Probably assists in splicing its own and other chloroplast group II introns. This chain is Maturase K, found in Pinus parviflora (Japanese white pine).